Consider the following 148-residue polypeptide: MKARNKRLMLVGGGIALLVAAAALVLSAFQQNLVFFHTPSEVAEGKAPVGKTFRVGGMVETGSIQRDADGVTVRFVITDTAKVIPVSYRGSLPDLFKEGKGAVVQGTLGADGQFRATEVLAKHDENYMPPEAAHALEQAHKTATTVQQ.

Topologically, residues 1 to 7 (MKARNKR) are cytoplasmic. A helical; Signal-anchor for type II membrane protein membrane pass occupies residues 8–28 (LMLVGGGIALLVAAAALVLSA). Over 29–148 (FQQNLVFFHT…AHKTATTVQQ (120 aa)) the chain is Periplasmic. Heme is bound by residues H123 and Y127.

It belongs to the CcmE/CycJ family.

The protein resides in the cell inner membrane. Heme chaperone required for the biogenesis of c-type cytochromes. Transiently binds heme delivered by CcmC and transfers the heme to apo-cytochromes in a process facilitated by CcmF and CcmH. This is Cytochrome c-type biogenesis protein CcmE from Azoarcus sp. (strain BH72).